The primary structure comprises 343 residues: Aspartate beta-hydroxylase domain-containing protein 2 (343 aa).

At 1 to 31 (MWLEWLVAWSWSLDGLRDCIATGIQSVRDCD) the chain is on the cytoplasmic side. A helical transmembrane segment spans residues 32-52 (GTAVITVACLLILFVWYCYHV). Residues 53-343 (GREQPRPHVS…ALDFIFAPGR (291 aa)) are Lumenal-facing. 2 N-linked (GlcNAc...) asparagine glycosylation sites follow: Asn77 and Asn185. 2-oxoglutarate-binding residues include Trp202 and Ser246. Position 257 (His257) interacts with Fe cation. Residue 266–268 (RCH) participates in 2-oxoglutarate binding. His302 contacts Fe cation. Arg315 is a binding site for 2-oxoglutarate.

The protein belongs to the aspartyl/asparaginyl beta-hydroxylase family. Fe cation is required as a cofactor.

Its subcellular location is the membrane. Its function is as follows. May function as 2-oxoglutarate-dependent dioxygenase. In Mus musculus (Mouse), this protein is Aspartate beta-hydroxylase domain-containing protein 2 (Asphd2).